The sequence spans 349 residues: N-acetyltaurine hydrolase (349 aa).

Positions 26, 28, 169, 201, 230, and 298 each coordinate a divalent metal cation.

This sequence belongs to the metallo-dependent hydrolases superfamily. Phosphotriesterase family. Requires a divalent metal cation as cofactor.

It is found in the cytoplasm. It localises to the cytosol. The enzyme catalyses N-acetyltaurine + H2O = taurine + acetate. The catalysed reaction is N-propanoyltaurine + H2O = propanoate + taurine. It carries out the reaction N-acetyl-L-methionine + H2O = L-methionine + acetate. It catalyses the reaction N-acetyl-L-isoleucine + H2O = L-isoleucine + acetate. The enzyme catalyses N-acetyl-L-leucine + H2O = L-leucine + acetate. The catalysed reaction is N-acetyl-L-valine + H2O = L-valine + acetate. Its function is as follows. N-acetyltaurine hydrolase that catalyzes the hydrolysis of N-acetyltaurine into taurine and acetate. PTER also acts on other N-acetyl amino acids (Met, Ile, Leu, Val) and N-propionyltaurine, but at lower rates. The polypeptide is N-acetyltaurine hydrolase (pter) (Danio rerio (Zebrafish)).